The primary structure comprises 234 residues: R-spondin-4 (234 aa).

Residues 1 to 19 (MRAPLCLLLLVAHAVDMLA) form the signal peptide. Asparagine 34 is a glycosylation site (N-linked (GlcNAc...) asparagine). 11 disulfide bridges follow: cysteine 35-cysteine 41, cysteine 38-cysteine 47, cysteine 50-cysteine 69, cysteine 73-cysteine 88, cysteine 91-cysteine 98, cysteine 95-cysteine 104, cysteine 107-cysteine 118, cysteine 122-cysteine 135, cysteine 139-cysteine 181, cysteine 150-cysteine 157, and cysteine 190-cysteine 196. The FU repeat unit spans residues 85-128 (VNRCKKCGATCESCFSQDFCIRCKRQFYLYKGKCLPTCPPGTLA). The TSP type-1 domain occupies 138-197 (ECELGPWGGWSPCTHNGKTCGSAWGLESRVREAGRAGHEEAATCQVLSESRKCPIQRPCP). The disordered stretch occupies residues 190 to 234 (CPIQRPCPGERSPGQKKGRKDRRPRKDRKLDRRLDVRPRQPGLQP). The segment covering 203–216 (GQKKGRKDRRPRKD) has biased composition (basic residues). Residues 217-227 (RKLDRRLDVRP) show a composition bias toward basic and acidic residues.

This sequence belongs to the R-spondin family. In terms of assembly, binds heparin. Interacts with LGR4, LGR5 and LGR6. In terms of processing, tyr-112 may be phosphorylated; however as this position is probably extracellular, the vivo relevance is not proven.

The protein resides in the secreted. Activator of the canonical Wnt signaling pathway by acting as a ligand for LGR4-6 receptors. Upon binding to LGR4-6 (LGR4, LGR5 or LGR6), LGR4-6 associate with phosphorylated LRP6 and frizzled receptors that are activated by extracellular Wnt receptors, triggering the canonical Wnt signaling pathway to increase expression of target genes. Also regulates the canonical Wnt/beta-catenin-dependent pathway and non-canonical Wnt signaling by acting as an inhibitor of ZNRF3, an important regulator of the Wnt signaling pathway. The chain is R-spondin-4 (RSPO4) from Homo sapiens (Human).